A 486-amino-acid chain; its full sequence is Malonate-semialdehyde dehydrogenase 1 (486 aa).

The NAD(+) site is built by phenylalanine 154, lysine 178, glutamate 181, arginine 182, and serine 231. Cysteine 286 serves as the catalytic Nucleophile. Position 386 (glutamate 386) interacts with NAD(+).

Belongs to the aldehyde dehydrogenase family. IolA subfamily. In terms of assembly, homotetramer.

The catalysed reaction is 3-oxopropanoate + NAD(+) + CoA + H2O = hydrogencarbonate + acetyl-CoA + NADH + H(+). The enzyme catalyses 2-methyl-3-oxopropanoate + NAD(+) + CoA + H2O = propanoyl-CoA + hydrogencarbonate + NADH + H(+). It participates in polyol metabolism; myo-inositol degradation into acetyl-CoA; acetyl-CoA from myo-inositol: step 7/7. Functionally, catalyzes the oxidation of malonate semialdehyde (MSA) and methylmalonate semialdehyde (MMSA) into acetyl-CoA and propanoyl-CoA, respectively. Is involved in a myo-inositol catabolic pathway. Bicarbonate, and not CO2, is the end-product of the enzymatic reaction. This chain is Malonate-semialdehyde dehydrogenase 1, found in Bacillus anthracis.